Consider the following 647-residue polypeptide: Threonine--tRNA ligase (647 aa).

The region spanning 1 to 61 is the TGS domain; it reads MIKITFPDGA…EEDGSIEIVT (61 aa). The tract at residues 240–538 is catalytic; the sequence is DHRKLGKELD…LIETYKGAFP (299 aa). Zn(2+) contacts are provided by Cys334, His385, and His515.

The protein belongs to the class-II aminoacyl-tRNA synthetase family. As to quaternary structure, homodimer. It depends on Zn(2+) as a cofactor.

The protein localises to the cytoplasm. The catalysed reaction is tRNA(Thr) + L-threonine + ATP = L-threonyl-tRNA(Thr) + AMP + diphosphate + H(+). In terms of biological role, catalyzes the attachment of threonine to tRNA(Thr) in a two-step reaction: L-threonine is first activated by ATP to form Thr-AMP and then transferred to the acceptor end of tRNA(Thr). Also edits incorrectly charged L-seryl-tRNA(Thr). In Streptococcus pyogenes serotype M18 (strain MGAS8232), this protein is Threonine--tRNA ligase.